We begin with the raw amino-acid sequence, 1058 residues long: Carbamoyl phosphate synthase large chain (1058 aa).

The tract at residues 1–401 (MPKRTDIQKI…SLLKACRSLE (401 aa)) is carboxyphosphate synthetic domain. Residues R129, R169, G175, G176, R208, I210, E215, G241, I242, H243, Q284, and E298 each coordinate ATP. Residues 133–327 (KQLMEELEQP…IAKLAAKIAV (195 aa)) form the ATP-grasp 1 domain. Mg(2+)-binding residues include Q284, E298, and N300. 3 residues coordinate Mn(2+): Q284, E298, and N300. The oligomerization domain stretch occupies residues 402–546 (IGVHHNEIPE…YSTYGWENES (145 aa)). Residues 547 to 929 (IRSDKESVLV…ALYKAFEASY (383 aa)) form a carbamoyl phosphate synthetic domain region. Residues 671-861 (EQALKELDIP…MAQVATKLIL (191 aa)) enclose the ATP-grasp 2 domain. ATP-binding residues include R707, S746, I748, E752, G777, V778, H779, S780, Q820, and E832. Q820, E832, and N834 together coordinate Mg(2+). Q820, E832, and N834 together coordinate Mn(2+). One can recognise an MGS-like domain in the interval 930-1058 (LHLPTFGNVV…ESRSFVTEAI (129 aa)). The allosteric domain stretch occupies residues 930-1058 (LHLPTFGNVV…ESRSFVTEAI (129 aa)).

Belongs to the CarB family. Composed of two chains; the small (or glutamine) chain promotes the hydrolysis of glutamine to ammonia, which is used by the large (or ammonia) chain to synthesize carbamoyl phosphate. Tetramer of heterodimers (alpha,beta)4. Mg(2+) is required as a cofactor. Mn(2+) serves as cofactor.

The enzyme catalyses hydrogencarbonate + L-glutamine + 2 ATP + H2O = carbamoyl phosphate + L-glutamate + 2 ADP + phosphate + 2 H(+). It carries out the reaction hydrogencarbonate + NH4(+) + 2 ATP = carbamoyl phosphate + 2 ADP + phosphate + 2 H(+). The protein operates within amino-acid biosynthesis; L-arginine biosynthesis; carbamoyl phosphate from bicarbonate: step 1/1. It functions in the pathway pyrimidine metabolism; UMP biosynthesis via de novo pathway; (S)-dihydroorotate from bicarbonate: step 1/3. Functionally, large subunit of the glutamine-dependent carbamoyl phosphate synthetase (CPSase). CPSase catalyzes the formation of carbamoyl phosphate from the ammonia moiety of glutamine, carbonate, and phosphate donated by ATP, constituting the first step of 2 biosynthetic pathways, one leading to arginine and/or urea and the other to pyrimidine nucleotides. The large subunit (synthetase) binds the substrates ammonia (free or transferred from glutamine from the small subunit), hydrogencarbonate and ATP and carries out an ATP-coupled ligase reaction, activating hydrogencarbonate by forming carboxy phosphate which reacts with ammonia to form carbamoyl phosphate. The polypeptide is Carbamoyl phosphate synthase large chain (Streptococcus pneumoniae (strain ATCC BAA-255 / R6)).